The chain runs to 747 residues: Cysteine--tRNA ligase, cytoplasmic (747 aa).

The interval 1 to 26 (MTESWEQGKGRRTQPPWSAPNTNEQP) is disordered. A compositionally biased stretch (polar residues) spans 15–25 (PPWSAPNTNEQ). Cys54 provides a ligand contact to Zn(2+). Gly55 serves as a coordination point for L-cysteine. The 'HIGH' region motif lies at 56 to 66 (PTVYDASHMGH). Position 95 (Thr95) interacts with L-cysteine. A 'KIIK' region motif is present at residues 100–103 (KIIK). Zn(2+)-binding residues include Cys347, His372, and Glu376. His372 contributes to the L-cysteine binding site. The short motif at 405 to 409 (KMSKS) is the 'KMSKS' region element. Lys408 is an ATP binding site. Basic and acidic residues predominate over residues 651–683 (EEKRKAEEEKQRKKEEAARKKQQQEAAKLEKMK). Disordered regions lie at residues 651 to 685 (EEKRKAEEEKQRKKEEAARKKQQQEAAKLEKMKIS) and 700 to 721 (FDESGFPTHDTEGKELSKGQTK).

The protein belongs to the class-I aminoacyl-tRNA synthetase family. As to quaternary structure, homodimer. Zn(2+) serves as cofactor.

The protein resides in the cytoplasm. The enzyme catalyses tRNA(Cys) + L-cysteine + ATP = L-cysteinyl-tRNA(Cys) + AMP + diphosphate. Its function is as follows. Catalyzes the ATP-dependent ligation of cysteine to tRNA(Cys). This Xenopus laevis (African clawed frog) protein is Cysteine--tRNA ligase, cytoplasmic (cars1).